The sequence spans 447 residues: Serine/threonine-protein kinase NLK2 (447 aa).

One can recognise a Protein kinase domain in the interval 60–349; the sequence is PEPDRPIGYG…AKDALAHPYL (290 aa). ATP is bound by residues 66 to 74 and Lys-89; that span reads IGYGAFGVV. The Proton acceptor role is filled by Asp-186.

This sequence belongs to the protein kinase superfamily. CMGC Ser/Thr protein kinase family. MAP kinase subfamily. As to quaternary structure, interacts with sox11, hmgxb4/hmg2l1, rnf138/narf, stat3.1 and mef2a. The cofactor is Mg(2+). As to expression, expressed widely in the ectoderm during early gastrula stage when neural induction is taking place. Expressed in the head region of neurula stage embryos. At the end of neurulation, expression becomes localized to the nervous system, and is restricted to the central nervous system, eye and head neural crest cells by the early tadpole stages.

It localises to the nucleus. Its subcellular location is the cytoplasm. It carries out the reaction L-seryl-[protein] + ATP = O-phospho-L-seryl-[protein] + ADP + H(+). The catalysed reaction is L-threonyl-[protein] + ATP = O-phospho-L-threonyl-[protein] + ADP + H(+). Activated by tyrosine and threonine phosphorylation. Its function is as follows. Negatively regulates Wnt/beta-catenin-signaling during development. Plays a role together with sox11 in neural induction during early embryogenesis. Involved in TGFbeta-mediated mesoderm induction in early embryos, acting downstream of map3k7/tak1 to phosphorylate stat3.1. Augments the rnf138/narf-directed ubiquitination and degradation of tcf/lef by enhancing the association of rnf138/narf and tcf/lef. Phosphorylates mef2a to play a role in anterior neural development, including eye formation. This is Serine/threonine-protein kinase NLK2 (nlk.2) from Xenopus laevis (African clawed frog).